The primary structure comprises 173 residues: MIDADGFRANVGIILANTQGQVLWAKRIGHNAWQFPQGGIDRGETPMDAMYRELWEEVGLHPRHVDLLAVTQDWLRYRLPKRYVRHGQYPLCIGQKQKWFLLRLDEPNTQHIRFDEGKAEFDNWQWVSYWYPLGQVIHFKRGVYRRALQELVPELPLQQGLIIPEQNNHLLQF.

The Nudix hydrolase domain maps to glycine 6–glutamine 149. The Nudix box motif lies at glycine 38–glycine 59.

It belongs to the Nudix hydrolase family. RppH subfamily. Requires a divalent metal cation as cofactor.

Accelerates the degradation of transcripts by removing pyrophosphate from the 5'-end of triphosphorylated RNA, leading to a more labile monophosphorylated state that can stimulate subsequent ribonuclease cleavage. The sequence is that of RNA pyrophosphohydrolase from Psychrobacter arcticus (strain DSM 17307 / VKM B-2377 / 273-4).